A 232-amino-acid polypeptide reads, in one-letter code: Response regulator MprA (232 aa).

The Response regulatory domain occupies 4–118 (RILVVDDDRA…ELLARMRALL (115 aa)). The residue at position 48 (aspartate 48) is a 4-aspartylphosphate. The ompR/PhoB-type DNA-binding region spans 131–229 (SVAMTFSDLS…VRGVGYVLRE (99 aa)).

Phosphorylated and dephosphorylated by MprB.

Its subcellular location is the cytoplasm. Its function is as follows. Member of the two-component regulatory system MprB/MprA which contributes to maintaining a balance among several systems involved in stress resistance and is required for establishment and maintenance of persistent infection in the host. Functions as a transcriptional regulator that recognizes a 19-bp nucleotide motif comprizing two loosely conserved 8-bp direct DNA-binding motif repeats separated by a 3-bp spacer region. This is Response regulator MprA (mprA) from Mycobacterium ulcerans (strain Agy99).